The sequence spans 238 residues: Octanoyltransferase (238 aa).

Residues 40-220 enclose the BPL/LPL catalytic domain; that stretch reads AGGSDALLLL…RVCDALDGRL (181 aa). Substrate contacts are provided by residues 78–85, 150–152, and 163–165; these read RGGKITWH, AIG, and GFA. Cys181 acts as the Acyl-thioester intermediate in catalysis.

This sequence belongs to the LipB family.

It is found in the cytoplasm. It carries out the reaction octanoyl-[ACP] + L-lysyl-[protein] = N(6)-octanoyl-L-lysyl-[protein] + holo-[ACP] + H(+). The protein operates within protein modification; protein lipoylation via endogenous pathway; protein N(6)-(lipoyl)lysine from octanoyl-[acyl-carrier-protein]: step 1/2. Its function is as follows. Catalyzes the transfer of endogenously produced octanoic acid from octanoyl-acyl-carrier-protein onto the lipoyl domains of lipoate-dependent enzymes. Lipoyl-ACP can also act as a substrate although octanoyl-ACP is likely to be the physiological substrate. This is Octanoyltransferase from Mycobacterium sp. (strain JLS).